The chain runs to 126 residues: Glycine cleavage system H protein (126 aa).

In terms of domain architecture, Lipoyl-binding spans 20–102 (IGTIGITDYA…LGDGWFFKVR (83 aa)). Lysine 61 carries the N6-lipoyllysine modification.

It belongs to the GcvH family. The glycine cleavage system is composed of four proteins: P, T, L and H. (R)-lipoate is required as a cofactor.

Its function is as follows. The glycine cleavage system catalyzes the degradation of glycine. The H protein shuttles the methylamine group of glycine from the P protein to the T protein. The protein is Glycine cleavage system H protein of Rhodospirillum rubrum (strain ATCC 11170 / ATH 1.1.1 / DSM 467 / LMG 4362 / NCIMB 8255 / S1).